The chain runs to 139 residues: Immunogenic miracidial antigen 8I (139 aa).

Positions 61–139 are disordered; the sequence is IDVGDEDYHD…PKKYGSGYKH (79 aa). Residues 64-85 are compositionally biased toward acidic residues; it reads GDEDYHDGDDDVDYTDDVDDVD. Over residues 90–103 the composition is skewed to polar residues; it reads SPSQLLQGGYQRNQ.

This sequence belongs to the immunogenic miracidial antigen family.

The chain is Immunogenic miracidial antigen 8I (8I) from Schistosoma japonicum (Blood fluke).